Here is a 278-residue protein sequence, read N- to C-terminus: Indole-3-glycerol phosphate synthase (278 aa).

It belongs to the TrpC family.

The enzyme catalyses 1-(2-carboxyphenylamino)-1-deoxy-D-ribulose 5-phosphate + H(+) = (1S,2R)-1-C-(indol-3-yl)glycerol 3-phosphate + CO2 + H2O. It participates in amino-acid biosynthesis; L-tryptophan biosynthesis; L-tryptophan from chorismate: step 4/5. In Pseudomonas fluorescens (strain SBW25), this protein is Indole-3-glycerol phosphate synthase.